Here is a 528-residue protein sequence, read N- to C-terminus: Glutamyl-tRNA(Gln) amidotransferase subunit B, mitochondrial (528 aa).

Residues 1–21 constitute a mitochondrion transit peptide; that stretch reads MSWRLSFRTNLLIYNVRRRNY.

Belongs to the GatB/GatE family. GatB subfamily. Subunit of the heterotrimeric GatCAB amidotransferase (AdT) complex, composed of A, B and C subunits.

It is found in the mitochondrion. It carries out the reaction L-glutamyl-tRNA(Gln) + L-glutamine + ATP + H2O = L-glutaminyl-tRNA(Gln) + L-glutamate + ADP + phosphate + H(+). Allows the formation of correctly charged Gln-tRNA(Gln) through the transamidation of misacylated Glu-tRNA(Gln) in the mitochondria. The reaction takes place in the presence of glutamine and ATP through an activated gamma-phospho-Glu-tRNA(Gln). The sequence is that of Glutamyl-tRNA(Gln) amidotransferase subunit B, mitochondrial from Aedes aegypti (Yellowfever mosquito).